The following is a 125-amino-acid chain: TSKPVQNRELQGYESTDFXGYFKGGLKYKAGGVASGFNHVLTNXLSAQRLLHVKGRRVVRATEVPLSWDSFNKGDCFIIDLGSEIYQWFGSSCNKYERLKASQVATGIRDNERNGRSQLIVVEEG.

Residue Y13 is modified to Phosphotyrosine. Residues 23 to 30 (KGGLKYKA) and 49 to 57 (RLLHVKGRR) contribute to the a 1,2-diacyl-sn-glycero-3-phospho-(1D-myo-inositol-4,5-bisphosphate) site. The stretch at 59–99 (VRATEVPLSWDSFNKGDCFIIDLGSEIYQWFGSSCNKYERL) is one Gelsolin-like 1 repeat.

The protein belongs to the villin/gelsolin family.

Its subcellular location is the cytoplasm. It is found in the cytoskeleton. It localises to the cell projection. The protein resides in the podosome. Functionally, ca(2+)-dependent actin filament-severing protein that has a regulatory function in exocytosis by affecting the organization of the microfilament network underneath the plasma membrane. In vitro, also has barbed end capping and nucleating activities in the presence of Ca(2+). Severing activity is inhibited by phosphatidylinositol 4,5-bis-phosphate (PIP2). Required for megakaryocyte differentiation, maturation, polyploidization and apoptosis with the release of platelet-like particles. Plays a role in osteoclastogenesis (OCG) and actin cytoskeletal organization in osteoclasts. Regulates chondrocyte proliferation and differentiation. Inhibits cell proliferation and tumorigenesis. Signaling is mediated by MAPK, p38 and JNK pathways. The chain is Scinderin (SCIN) from Sus scrofa (Pig).